Reading from the N-terminus, the 148-residue chain is Large ribosomal subunit protein bL9 (148 aa).

This sequence belongs to the bacterial ribosomal protein bL9 family.

Binds to the 23S rRNA. This is Large ribosomal subunit protein bL9 from Staphylococcus epidermidis (strain ATCC 35984 / DSM 28319 / BCRC 17069 / CCUG 31568 / BM 3577 / RP62A).